A 177-amino-acid chain; its full sequence is MEERNHENTLEKDLEAVGQEAQALEERLKAAEEELKGLKDKYLRLLADFDNYRKRMEEELKAREREGVLKALRALLPVLDDLDRALEFAEASPESIRQGVRAIRDGFFRILAGLGVEEVPGEGEAFDPRYHEAVGLLPGEPGKVAKVFQRGFRMGEALVRPARVAVGEEKREEADLE.

It belongs to the GrpE family. Homodimer. K(+) serves as cofactor.

The protein localises to the cytoplasm. Its function is as follows. Participates actively in the response to hyperosmotic and heat shock by preventing the aggregation of stress-denatured proteins, in association with DnaK and GrpE. It is the nucleotide exchange factor for DnaK and may function as a thermosensor. Unfolded proteins bind initially to DnaJ; upon interaction with the DnaJ-bound protein, DnaK hydrolyzes its bound ATP, resulting in the formation of a stable complex. GrpE releases ADP from DnaK; ATP binding to DnaK triggers the release of the substrate protein, thus completing the reaction cycle. Several rounds of ATP-dependent interactions between DnaJ, DnaK and GrpE are required for fully efficient folding. This Thermus thermophilus (strain ATCC 27634 / DSM 579 / HB8) protein is Protein GrpE.